The primary structure comprises 434 residues: Probable G-protein coupled receptor 150 (434 aa).

The Extracellular segment spans residues Met1–Asp3. The helical transmembrane segment at Leu4 to Trp24 threads the bilayer. The Cytoplasmic portion of the chain corresponds to Gly25 to Arg43. The chain crosses the membrane as a helical span at residues Val44–Leu64. The Extracellular portion of the chain corresponds to Cys65–Lys81. A helical transmembrane segment spans residues Met82–Leu102. The Cytoplasmic portion of the chain corresponds to Ser103–Arg162. A helical transmembrane segment spans residues Ala163 to Val183. Residues Arg184–Ala237 lie on the Extracellular side of the membrane. Positions Pro188–Ala210 are disordered. Pro residues predominate over residues Ser189–Pro205. The helical transmembrane segment at Val238–Val258 threads the bilayer. The Cytoplasmic portion of the chain corresponds to Trp259–Ser293. Residues Leu294 to Ala314 form a helical membrane-spanning segment. The Extracellular segment spans residues Arg315 to Ser334. A helical transmembrane segment spans residues Ala335–Phe355. Over Gln356–Phe434 the chain is Cytoplasmic. The span at Trp398–Arg407 shows a compositional bias: basic residues. The interval Trp398–Phe434 is disordered. Positions Arg417–Leu426 are enriched in pro residues.

Belongs to the G-protein coupled receptor 1 family.

It is found in the cell membrane. Orphan receptor. The protein is Probable G-protein coupled receptor 150 (GPR150) of Homo sapiens (Human).